A 156-amino-acid chain; its full sequence is Transcription elongation factor GreA (156 aa).

The stretch at 6 to 75 (IYLTKEGYEK…ELENMLSKAE (70 aa)) forms a coiled coil.

It belongs to the GreA/GreB family.

Its function is as follows. Necessary for efficient RNA polymerase transcription elongation past template-encoded arresting sites. The arresting sites in DNA have the property of trapping a certain fraction of elongating RNA polymerases that pass through, resulting in locked ternary complexes. Cleavage of the nascent transcript by cleavage factors such as GreA or GreB allows the resumption of elongation from the new 3'terminus. GreA releases sequences of 2 to 3 nucleotides. This is Transcription elongation factor GreA from Thermosipho africanus (strain TCF52B).